The chain runs to 217 residues: Trichothecene biosynthesis transcription regulator TRI6 (217 aa).

A C2H2-type zinc finger spans residues 185 to 215; that stretch reads VRCPWHDQEGQQCLRVFSRVDNMRDHYRRIH.

It is found in the nucleus. Transcriptional activator of part of the core trichothecene biosynthesis cluster. This chain is Trichothecene biosynthesis transcription regulator TRI6, found in Fusarium sporotrichioides.